Reading from the N-terminus, the 300-residue chain is CDAN1-interacting nuclease 1 (300 aa).

Its subcellular location is the nucleus. The protein resides in the cytoplasm. In terms of biological role, may play a role in erythroid cell differentiation. The protein is CDAN1-interacting nuclease 1 (cdin1) of Danio rerio (Zebrafish).